Consider the following 297-residue polypeptide: Acetaldehyde dehydrogenase (297 aa).

Position 15 to 18 (15 to 18 (SGSI)) interacts with NAD(+). The active-site Acyl-thioester intermediate is Cys130. NAD(+) contacts are provided by residues 162 to 170 (SAGIATREN) and Asn272.

Belongs to the acetaldehyde dehydrogenase family.

The catalysed reaction is acetaldehyde + NAD(+) + CoA = acetyl-CoA + NADH + H(+). This is Acetaldehyde dehydrogenase (mhpF) from Burkholderia pseudomallei (strain K96243).